Here is a 149-residue protein sequence, read N- to C-terminus: D-aminoacyl-tRNA deacylase (149 aa).

The Gly-cisPro motif, important for rejection of L-amino acids signature appears at 137–138 (GP).

This sequence belongs to the DTD family. In terms of assembly, homodimer.

The protein localises to the cytoplasm. The catalysed reaction is glycyl-tRNA(Ala) + H2O = tRNA(Ala) + glycine + H(+). It carries out the reaction a D-aminoacyl-tRNA + H2O = a tRNA + a D-alpha-amino acid + H(+). In terms of biological role, an aminoacyl-tRNA editing enzyme that deacylates mischarged D-aminoacyl-tRNAs. Also deacylates mischarged glycyl-tRNA(Ala), protecting cells against glycine mischarging by AlaRS. Acts via tRNA-based rather than protein-based catalysis; rejects L-amino acids rather than detecting D-amino acids in the active site. By recycling D-aminoacyl-tRNA to D-amino acids and free tRNA molecules, this enzyme counteracts the toxicity associated with the formation of D-aminoacyl-tRNA entities in vivo and helps enforce protein L-homochirality. The sequence is that of D-aminoacyl-tRNA deacylase from Syntrophomonas wolfei subsp. wolfei (strain DSM 2245B / Goettingen).